The primary structure comprises 445 residues: FAS-associated factor 2 (445 aa).

A2 is modified (N-acetylalanine). A UBA domain is found at E12–Q48. Position 167 is an N6-acetyllysine (K167). A coiled-coil region spans residues S275 to L350. Positions S300–S361 are disordered. Residues A303–E348 are compositionally biased toward basic and acidic residues. Positions D357–V439 constitute a UBX domain.

As to quaternary structure, identified in a complex that contains SEL1L, OS9, FAF2/UBXD8, UBE2J1/UBC6E and AUP1. Interacts with YOD1. Interacts (via N-terminus) with UBQLN2 (via C-terminus). Interacts with PNPLA2. Interacts with ZFAND2B; probably through VCP. Interacts with LMBR1L and UBAC2.

Its subcellular location is the cytoplasm. The protein resides in the lipid droplet. It is found in the endoplasmic reticulum. Its function is as follows. Plays an important role in endoplasmic reticulum-associated degradation (ERAD) that mediates ubiquitin-dependent degradation of misfolded endoplasmic reticulum proteins. By controlling the steady-state expression of the IGF1R receptor, indirectly regulates the insulin-like growth factor receptor signaling pathway. Involved in inhibition of lipid droplet degradation by binding to phospholipase PNPL2 and inhibiting its activity by promoting dissociation of PNPL2 from its endogenous activator, ABHD5 which inhibits the rate of triacylglycerol hydrolysis. Involved in stress granule disassembly: associates with ubiquitinated G3BP1 in response to heat shock, thereby promoting interaction between ubiquitinated G3BP1 and VCP, followed by G3BP1 extraction from stress granules and stress granule disassembly. The polypeptide is FAS-associated factor 2 (Faf2) (Mus musculus (Mouse)).